We begin with the raw amino-acid sequence, 264 residues long: Small ribosomal subunit protein uS2 (264 aa).

Positions 228–264 are disordered; that stretch reads VDTSATVDEEEAEVAEETESMESAEDLDADLIEEEAE. Over residues 234-264 the composition is skewed to acidic residues; that stretch reads VDEEEAEVAEETESMESAEDLDADLIEEEAE.

It belongs to the universal ribosomal protein uS2 family.

The protein is Small ribosomal subunit protein uS2 of Symbiobacterium thermophilum (strain DSM 24528 / JCM 14929 / IAM 14863 / T).